A 309-amino-acid polypeptide reads, in one-letter code: Dihydroorotate dehydrogenase B (NAD(+)), catalytic subunit (309 aa).

FMN is bound by residues serine 21 and 45–46; that span reads KA. Substrate contacts are provided by residues lysine 45 and 69 to 73; that span reads NAIGL. Asparagine 99 and asparagine 127 together coordinate FMN. Asparagine 127 serves as a coordination point for substrate. Cysteine 130 (nucleophile) is an active-site residue. Residues lysine 165 and isoleucine 191 each contribute to the FMN site. 192–193 provides a ligand contact to substrate; it reads NT. FMN-binding positions include glycine 217, 243 to 244, and 265 to 266; these read GG and GT.

Belongs to the dihydroorotate dehydrogenase family. Type 1 subfamily. Heterotetramer of 2 PyrK and 2 PyrD type B subunits. It depends on FMN as a cofactor.

It localises to the cytoplasm. It carries out the reaction (S)-dihydroorotate + NAD(+) = orotate + NADH + H(+). The protein operates within pyrimidine metabolism; UMP biosynthesis via de novo pathway; orotate from (S)-dihydroorotate (NAD(+) route): step 1/1. In terms of biological role, catalyzes the conversion of dihydroorotate to orotate with NAD(+) as electron acceptor. The sequence is that of Dihydroorotate dehydrogenase B (NAD(+)), catalytic subunit (pyrD) from Bacillus thuringiensis (strain Al Hakam).